The chain runs to 304 residues: HPr kinase/phosphorylase (304 aa).

Residues His136 and Lys157 contribute to the active site. 151 to 158 (GESGIGKS) is a binding site for ATP. Ser158 is a Mg(2+) binding site. The Proton acceptor; for phosphorylation activity. Proton donor; for dephosphorylation activity role is filled by Asp175. Residues 198 to 207 (LEVRGMGIID) are important for the catalytic mechanism of both phosphorylation and dephosphorylation. Glu199 contacts Mg(2+). Arg240 is a catalytic residue. An important for the catalytic mechanism of dephosphorylation region spans residues 261-266 (PIRPGR).

The protein belongs to the HPrK/P family. Homohexamer. It depends on Mg(2+) as a cofactor.

The enzyme catalyses [HPr protein]-L-serine + ATP = [HPr protein]-O-phospho-L-serine + ADP + H(+). It catalyses the reaction [HPr protein]-O-phospho-L-serine + phosphate + H(+) = [HPr protein]-L-serine + diphosphate. Functionally, catalyzes the ATP- as well as the pyrophosphate-dependent phosphorylation of a specific serine residue in HPr, a phosphocarrier protein of the phosphoenolpyruvate-dependent sugar phosphotransferase system (PTS). HprK/P also catalyzes the pyrophosphate-producing, inorganic phosphate-dependent dephosphorylation (phosphorolysis) of seryl-phosphorylated HPr (P-Ser-HPr). The two antagonistic activities of HprK/P are regulated by several intracellular metabolites, which change their concentration in response to the absence or presence of rapidly metabolisable carbon sources (glucose, fructose, etc.) in the growth medium. Therefore, by controlling the phosphorylation state of HPr, HPrK/P is a sensor enzyme that plays a major role in the regulation of carbon metabolism and sugar transport: it mediates carbon catabolite repression (CCR), and regulates PTS-catalyzed carbohydrate uptake and inducer exclusion. This is HPr kinase/phosphorylase from Clostridium acetobutylicum (strain ATCC 824 / DSM 792 / JCM 1419 / IAM 19013 / LMG 5710 / NBRC 13948 / NRRL B-527 / VKM B-1787 / 2291 / W).